The chain runs to 483 residues: Siroheme synthase (483 aa).

The precorrin-2 dehydrogenase /sirohydrochlorin ferrochelatase stretch occupies residues 1–203 (MNYFPIFANL…RQNTLAEREL (203 aa)). NAD(+) is bound by residues 22 to 23 (AV) and 43 to 44 (KH). Position 128 is a phosphoserine (Ser128). The uroporphyrinogen-III C-methyltransferase stretch occupies residues 217 to 483 (GSVSLVGAGP…GGLNAGQRAA (267 aa)). Pro226 serves as a coordination point for S-adenosyl-L-methionine. Residue Asp249 is the Proton acceptor of the active site. Residue Lys271 is the Proton donor of the active site. S-adenosyl-L-methionine-binding positions include 302-304 (GGD), Val307, 332-333 (TA), Met384, and Gly413.

It in the N-terminal section; belongs to the precorrin-2 dehydrogenase / sirohydrochlorin ferrochelatase family. This sequence in the C-terminal section; belongs to the precorrin methyltransferase family.

It catalyses the reaction uroporphyrinogen III + 2 S-adenosyl-L-methionine = precorrin-2 + 2 S-adenosyl-L-homocysteine + H(+). It carries out the reaction precorrin-2 + NAD(+) = sirohydrochlorin + NADH + 2 H(+). The enzyme catalyses siroheme + 2 H(+) = sirohydrochlorin + Fe(2+). It participates in cofactor biosynthesis; adenosylcobalamin biosynthesis; precorrin-2 from uroporphyrinogen III: step 1/1. Its pathway is cofactor biosynthesis; adenosylcobalamin biosynthesis; sirohydrochlorin from precorrin-2: step 1/1. It functions in the pathway porphyrin-containing compound metabolism; siroheme biosynthesis; precorrin-2 from uroporphyrinogen III: step 1/1. The protein operates within porphyrin-containing compound metabolism; siroheme biosynthesis; siroheme from sirohydrochlorin: step 1/1. It participates in porphyrin-containing compound metabolism; siroheme biosynthesis; sirohydrochlorin from precorrin-2: step 1/1. Functionally, multifunctional enzyme that catalyzes the SAM-dependent methylations of uroporphyrinogen III at position C-2 and C-7 to form precorrin-2 via precorrin-1. Then it catalyzes the NAD-dependent ring dehydrogenation of precorrin-2 to yield sirohydrochlorin. Finally, it catalyzes the ferrochelation of sirohydrochlorin to yield siroheme. The chain is Siroheme synthase from Neisseria meningitidis serogroup B (strain ATCC BAA-335 / MC58).